Reading from the N-terminus, the 380-residue chain is Crotonobetainyl-CoA reductase (380 aa).

Belongs to the acyl-CoA dehydrogenase family. As to quaternary structure, homotetramer. It depends on FAD as a cofactor.

The protein localises to the cytoplasm. The enzyme catalyses 4-(trimethylamino)butanoyl-CoA + oxidized [electron-transfer flavoprotein] + H(+) = crotonobetainyl-CoA + reduced [electron-transfer flavoprotein]. It functions in the pathway amine and polyamine metabolism; carnitine metabolism. In terms of biological role, catalyzes the reduction of crotonobetainyl-CoA to gamma-butyrobetainyl-CoA. The protein is Crotonobetainyl-CoA reductase of Shigella flexneri serotype 5b (strain 8401).